The following is a 547-amino-acid chain: Cytochrome P450 monooxygenase 128 (547 aa).

A helical membrane pass occupies residues 9-25 (IPWAAGATLLAWAAYKI). N-linked (GlcNAc...) asparagine glycosylation is found at N336 and N438. C483 serves as a coordination point for heme.

Belongs to the cytochrome P450 family. It depends on heme as a cofactor.

Its subcellular location is the membrane. The protein operates within secondary metabolite biosynthesis. Functionally, cytochrome P450 monooxygenase that is able to use 7-ethoxycoumarin and testosterone as substrates for oxidation. The polypeptide is Cytochrome P450 monooxygenase 128 (Postia placenta (strain ATCC 44394 / Madison 698-R) (Brown rot fungus)).